The sequence spans 187 residues: KS71A fimbrillin (187 aa).

The N-terminal stretch at 1–21 is a signal peptide; it reads MIKSVIAGAVAMAVVSFGANA. Cysteine 43 and cysteine 82 are joined by a disulfide.

Belongs to the fimbrial protein family.

It localises to the fimbrium. In terms of biological role, fimbriae (also called pili), polar filaments radiating from the surface of the bacterium to a length of 0.5-1.5 micrometers and numbering 100-300 per cell, enable bacteria to colonize the epithelium of specific host organs. The polypeptide is KS71A fimbrillin (KS71A) (Escherichia coli).